A 1462-amino-acid chain; its full sequence is Serine/threonine-protein kinase HSL1 (1462 aa).

2 disordered regions span residues 1 to 26 (MSTVVNRRSSHQFDSPSNHLDHSSSM) and 41 to 69 (RLSQISTNTNNSNKKRKTQNKIGPWKLGR). The region spanning 65 to 330 (WKLGRTLGRG…IDAILTHPLL (266 aa)) is the Protein kinase domain. ATP contacts are provided by residues 71–79 (LGRGSTGRV) and Lys94. Asp201 functions as the Proton acceptor in the catalytic mechanism. Disordered stretches follow at residues 412-450 (SNSFNSSNDVDSARSLPRSTSYVKTTVTDHATGEKHTTV), 471-540 (SAKG…TSVN), 598-637 (ENSKPVSKTPVSQLPPPPPPPIETPTSRTNSVKRGKTWSL), 992-1031 (EDEEFEDEKPFISVPSSEDDEGNTHKNKRGGLRDSGNYDF), 1095-1230 (KETL…QQTK), and 1269-1321 (NRAA…LQKE). Polar residues-rich tracts occupy residues 428–440 (PRSTSYVKTTVTD) and 471–487 (SAKGNVLSNITNRPNTP). Low complexity predominate over residues 510 to 526 (ASRSRNASSRSLKSNSS). Polar residues predominate over residues 527 to 540 (TGRNGNNASVTSVN). Residues 610–620 (QLPPPPPPPIE) are compositionally biased toward pro residues. Residues 636-715 (SLARRERELA…KLQKHQSAHD (80 aa)) adopt a coiled-coil conformation. Residues 1095–1130 (KETLLKNHSSDEATIEVKEDNNEHDFNDKIKQHYDD) are compositionally biased toward basic and acidic residues. Residues 1131 to 1153 (NGDSEEDDEDEDEEEEDDDDDDD) show a composition bias toward acidic residues. Composition is skewed to polar residues over residues 1165–1176 (HNYSLAEITSES), 1197–1218 (STGIFSTTQFPRSPYVVNNNGD), and 1292–1302 (NISQPLSSPTK).

It belongs to the protein kinase superfamily. CAMK Ser/Thr protein kinase family. NIM1 subfamily. Post-translationally, phosphorylated throughout the cell cycle, except for the G1 phase.

The protein resides in the bud neck. It carries out the reaction L-seryl-[protein] + ATP = O-phospho-L-seryl-[protein] + ADP + H(+). It catalyses the reaction L-threonyl-[protein] + ATP = O-phospho-L-threonyl-[protein] + ADP + H(+). In terms of biological role, protein kinase involved in determination of morphology during the cell cycle of both yeast-form and hyphal cells via regulation of SWE1 and CDC28. Regulates pseudohypha formation, but is not required for septin ring organization or septum formation. Plays an essential role in virulence in a mouse model. This Candida albicans (strain SC5314 / ATCC MYA-2876) (Yeast) protein is Serine/threonine-protein kinase HSL1 (HSL1).